Consider the following 455-residue polypeptide: D-inositol 3-phosphate glycosyltransferase (455 aa).

Residues 1–25 (MSQHVSRLGGLRGRSHGHGAFGGPY) are disordered. H45 is a 1D-myo-inositol 3-phosphate binding site. Residues 51–52 (QP) and G59 contribute to the UDP-N-acetyl-alpha-D-glucosamine site. Residues 56–61 (DAGGMN), K114, Y147, T171, and R191 contribute to the 1D-myo-inositol 3-phosphate site. The UDP-N-acetyl-alpha-D-glucosamine site is built by R266 and K271. Mg(2+) contacts are provided by Y341, R342, and A344. Residues E354 and E362 each contribute to the UDP-N-acetyl-alpha-D-glucosamine site. T368 contributes to the Mg(2+) binding site.

Belongs to the glycosyltransferase group 1 family. MshA subfamily. As to quaternary structure, homodimer.

The catalysed reaction is 1D-myo-inositol 3-phosphate + UDP-N-acetyl-alpha-D-glucosamine = 1D-myo-inositol 2-acetamido-2-deoxy-alpha-D-glucopyranoside 3-phosphate + UDP + H(+). Its function is as follows. Catalyzes the transfer of a N-acetyl-glucosamine moiety to 1D-myo-inositol 3-phosphate to produce 1D-myo-inositol 2-acetamido-2-deoxy-glucopyranoside 3-phosphate in the mycothiol biosynthesis pathway. In Streptomyces bingchenggensis (strain BCW-1), this protein is D-inositol 3-phosphate glycosyltransferase.